The following is a 1630-amino-acid chain: Transient receptor potential cation channel subfamily M member 1 (1630 aa).

Disordered regions lie at residues 1 to 25 (MGSM…GSQK), 65 to 92 (PLPS…SVSK), 453 to 492 (APPV…EVEE), 620 to 643 (LGME…EEEI), and 824 to 858 (SKEN…HKKQ). The Cytoplasmic segment spans residues 1-877 (MGSMRKMSSS…CEFYNAPIVK (877 aa)). The segment covering 8 to 25 (SSSFKRGSIKSSTSGSQK) has biased composition (low complexity). A compositionally biased stretch (polar residues) spans 69-92 (VTPSSTAEDTKQGDAQSGKWSVSK). Residues 474–485 (GRGKGKGKKKGK) show a composition bias toward basic residues. 2 stretches are compositionally biased toward basic and acidic residues: residues 825 to 834 (KENEDGKEKE) and 845 to 855 (GSRKGDEENEH). The chain crosses the membrane as a helical span at residues 878–898 (FWFYTISYLGYLLLFNYVILV). Residues 899–944 (RMDGWPSPQEWIVISYIVSLALEKIREILMSEPGKLSQKIKVWLQE) lie on the Extracellular side of the membrane. A helical membrane pass occupies residues 945–965 (YWNITDLVAISMFMVGAILRL). Topologically, residues 966–975 (QNQPYMGYGR) are cytoplasmic. Residues 976 to 996 (VIYCVDIILWYIRVLDIFGVN) form a helical membrane-spanning segment. At 997–1008 (KYLGPYVMMIGK) the chain is on the extracellular side. The helical transmembrane segment at 1009–1029 (MMIDMLYFVVIMLVVLMSFGV) threads the bilayer. Residues 1030–1107 (ARQAILHPEE…CIPGAWLTPA (78 aa)) are Cytoplasmic-facing. The chain crosses the membrane as a helical span at residues 1108–1128 (LMACYLLVANILLVNLLIAVF). Asn1129 carries an N-linked (GlcNAc...) asparagine glycan. Residues 1129–1158 (NNTFFEVKSISNQVWKFQRYQLIMTFHDRP) are Extracellular-facing. The chain crosses the membrane as a helical span at residues 1159–1179 (VLPPPMIILSHIYIIVMRLSG). Residues 1180-1630 (RCRKKREGDQ…QEKGNPETEC (451 aa)) are Cytoplasmic-facing. The stretch at 1235–1255 (IRVTSERVENMSMRLEEINER) forms a coiled coil. Disordered stretches follow at residues 1362-1414 (EDVK…AGEL) and 1575-1630 (CLRS…ETEC).

The protein belongs to the transient receptor (TC 1.A.4) family. LTrpC subfamily. TRPM1 sub-subfamily. In terms of assembly, interacts with TRPM3; the interaction results in the formation of a heteromultimeric cation channel complex that are functionally different from the homomeric channels. Interacts with GPR179. Associates with both guanine nucleotide-binding proteins G(o) and beta-gamma G protein dimer; implicated in directly regulating TRPM1 channel open-state.

Its subcellular location is the cell membrane. The protein localises to the endoplasmic reticulum membrane. It is found in the cell projection. It localises to the axon. The enzyme catalyses Ca(2+)(in) = Ca(2+)(out). The catalysed reaction is Mg(2+)(in) = Mg(2+)(out). It catalyses the reaction Mn(2+)(in) = Mn(2+)(out). It carries out the reaction Ni(2+)(in) = Ni(2+)(out). Inhibited by extracellular zinc ions. Inhibited by intracellular Mg(2+). Activated by the neuroactive steroid pregnenolone sulfate. Negatively regulated by activation of GRM6 receptors in the ON-bipolar cells. Constitutively open nonselective divalent cation-conducting channels which mediate the influx of Ca(2+), Mg(2+), Mn(2+), Ba(2+), and Ni(2+) into the cytoplasm, leading to membrane depolarization. Impermeable to zinc ions. In addition, forms heteromultimeric ion channels with TRPM3 which are permeable for calcium and zinc ions. Plays an essential role for the depolarizing photoresponse of retinal ON bipolar cells. In the dark, tonic release of glutamate activates the G-protein coupled receptor for glutamate GRM6, its activation induces the release of G(o) protein and the beta-gamma G protein dimer. Both subunits can interact and inactivate the TRPM1 channel. A light onset, induces decrease in glutamate release and deactivation of GRM6 leading to channel opening and membrane depolarization. May play a role in metastasis suppression. In Rattus norvegicus (Rat), this protein is Transient receptor potential cation channel subfamily M member 1.